The primary structure comprises 310 residues: MRLVFAGTPEVAVPSLDALLASEHEVVAVVTRPDAAAGRGRRLVASPVARRAAEAGIEVLKPARADDPAFLDRLRELAPDCCPVVAYGALLRQEALDIPRYGWVNLHFSLLPAWRGAAPVQHAILHGDDITGATTFQIERELDAGPVYGTVTEPIGPRDTSGDLLERLAKSGAELLVRTIDGIAKNELVPRPQGSEGVSYAPKLTPDDARVDFTAPALRVDRLIRACTPAPGAWTRFRGTRIKLGPVEPLPDAAPLPPGQLVATSRDVLVGTATHPVRLGEVQPQGKKAMPAADWARGARIGDGERFGDD.

109-112 contributes to the (6S)-5,6,7,8-tetrahydrofolate binding site; it reads SLLP. The disordered stretch occupies residues 283–310; it reads QPQGKKAMPAADWARGARIGDGERFGDD. Basic and acidic residues predominate over residues 300-310; it reads RIGDGERFGDD.

The protein belongs to the Fmt family.

It catalyses the reaction L-methionyl-tRNA(fMet) + (6R)-10-formyltetrahydrofolate = N-formyl-L-methionyl-tRNA(fMet) + (6S)-5,6,7,8-tetrahydrofolate + H(+). Attaches a formyl group to the free amino group of methionyl-tRNA(fMet). The formyl group appears to play a dual role in the initiator identity of N-formylmethionyl-tRNA by promoting its recognition by IF2 and preventing the misappropriation of this tRNA by the elongation apparatus. This is Methionyl-tRNA formyltransferase from Thermobifida fusca (strain YX).